We begin with the raw amino-acid sequence, 876 residues long: Alanine--tRNA ligase (876 aa).

Zn(2+) contacts are provided by H565, H569, C667, and H671.

Belongs to the class-II aminoacyl-tRNA synthetase family. The cofactor is Zn(2+).

Its subcellular location is the cytoplasm. It carries out the reaction tRNA(Ala) + L-alanine + ATP = L-alanyl-tRNA(Ala) + AMP + diphosphate. In terms of biological role, catalyzes the attachment of alanine to tRNA(Ala) in a two-step reaction: alanine is first activated by ATP to form Ala-AMP and then transferred to the acceptor end of tRNA(Ala). Also edits incorrectly charged Ser-tRNA(Ala) and Gly-tRNA(Ala) via its editing domain. The chain is Alanine--tRNA ligase from Staphylococcus epidermidis (strain ATCC 35984 / DSM 28319 / BCRC 17069 / CCUG 31568 / BM 3577 / RP62A).